Here is a 721-residue protein sequence, read N- to C-terminus: Polyribonucleotide nucleotidyltransferase (721 aa).

Positions 495 and 501 each coordinate Mg(2+). A KH domain is found at 562–621; the sequence is PRLLSFRIDPELIGTVIGPGGRTIKGITERTNTKIDIEDSGIVTIASHDGAAAEEAQKII. The region spanning 631–699 is the S1 motif domain; it reads GEMFSGSITR…NRGRINLTLR (69 aa). Residues 700-721 are disordered; it reads GVPQSGESTEVEPQPTPVAPLS.

Belongs to the polyribonucleotide nucleotidyltransferase family. Mg(2+) is required as a cofactor.

The protein resides in the cytoplasm. It catalyses the reaction RNA(n+1) + phosphate = RNA(n) + a ribonucleoside 5'-diphosphate. Functionally, involved in mRNA degradation. Catalyzes the phosphorolysis of single-stranded polyribonucleotides processively in the 3'- to 5'-direction. In Synechococcus sp. (strain CC9902), this protein is Polyribonucleotide nucleotidyltransferase.